The chain runs to 87 residues: Large ribosomal subunit protein bL27 (87 aa).

The disordered stretch occupies residues methionine 1–arginine 25. Residues alanine 7 to glutamine 19 show a composition bias toward polar residues.

Belongs to the bacterial ribosomal protein bL27 family.

This Rhodococcus opacus (strain B4) protein is Large ribosomal subunit protein bL27.